The sequence spans 87 residues: Putative phytosulfokines 4 (87 aa).

Residues 1–23 form the signal peptide; that stretch reads MANLSTLITIALLLCATMLTCSA. Positions 24–77 are excised as a propeptide; the sequence is RPEPAYFASFTTSPADTLSLEMIESKLHEVAGESCDKEDDEDCLVRRTLTAHLD. Sulfotyrosine is present on residues Tyr78 and Tyr80. Positions 83–87 are excised as a propeptide; the sequence is KNNHH.

The protein belongs to the phytosulfokine family. Sulfation is important for activity and for the binding to a putative membrane receptor.

It is found in the secreted. In terms of biological role, promotes plant cell differentiation, organogenesis and somatic embryogenesis as well as cell proliferation. This Arabidopsis thaliana (Mouse-ear cress) protein is Putative phytosulfokines 4 (PSK4).